The sequence spans 291 residues: 4-hydroxy-tetrahydrodipicolinate synthase (291 aa).

Residue Thr-47 participates in pyruvate binding. The active-site Proton donor/acceptor is Tyr-134. Catalysis depends on Lys-162, which acts as the Schiff-base intermediate with substrate. Ile-205 lines the pyruvate pocket.

The protein belongs to the DapA family. In terms of assembly, homotetramer; dimer of dimers.

It is found in the cytoplasm. It carries out the reaction L-aspartate 4-semialdehyde + pyruvate = (2S,4S)-4-hydroxy-2,3,4,5-tetrahydrodipicolinate + H2O + H(+). The protein operates within amino-acid biosynthesis; L-lysine biosynthesis via DAP pathway; (S)-tetrahydrodipicolinate from L-aspartate: step 3/4. Its function is as follows. Catalyzes the condensation of (S)-aspartate-beta-semialdehyde [(S)-ASA] and pyruvate to 4-hydroxy-tetrahydrodipicolinate (HTPA). The sequence is that of 4-hydroxy-tetrahydrodipicolinate synthase from Methanosphaerula palustris (strain ATCC BAA-1556 / DSM 19958 / E1-9c).